Reading from the N-terminus, the 251-residue chain is Ubiquitin-conjugating enzyme E2 22 (251 aa).

Positions 10–156 (NVIKQLAKEL…ARLYTGIHAK (147 aa)) constitute a UBC core domain. C94 acts as the Glycyl thioester intermediate in catalysis. A compositionally biased stretch (basic and acidic residues) spans 230–240 (GLAKVQADKKK). Residues 230 to 251 (GLAKVQADKKKVDARKKSLKRL) are disordered. The stretch at 230–251 (GLAKVQADKKKVDARKKSLKRL) forms a coiled coil. A compositionally biased stretch (basic residues) spans 241 to 251 (VDARKKSLKRL).

Belongs to the ubiquitin-conjugating enzyme family. Post-translationally, self-ubiquitinated. Expressed in seeds, pistils, siliques, hypocotyls and leaves.

The catalysed reaction is S-ubiquitinyl-[E1 ubiquitin-activating enzyme]-L-cysteine + [E2 ubiquitin-conjugating enzyme]-L-cysteine = [E1 ubiquitin-activating enzyme]-L-cysteine + S-ubiquitinyl-[E2 ubiquitin-conjugating enzyme]-L-cysteine.. The protein operates within protein modification; protein ubiquitination. Functionally, accepts the ubiquitin from the E1 complex and catalyzes its covalent attachment to other proteins. The sequence is that of Ubiquitin-conjugating enzyme E2 22 (UBC22) from Arabidopsis thaliana (Mouse-ear cress).